We begin with the raw amino-acid sequence, 273 residues long: 2,3,4,5-tetrahydropyridine-2,6-dicarboxylate N-succinyltransferase (273 aa).

2 residues coordinate substrate: arginine 105 and aspartate 142.

This sequence belongs to the transferase hexapeptide repeat family. Homotrimer.

The protein localises to the cytoplasm. The catalysed reaction is (S)-2,3,4,5-tetrahydrodipicolinate + succinyl-CoA + H2O = (S)-2-succinylamino-6-oxoheptanedioate + CoA. The protein operates within amino-acid biosynthesis; L-lysine biosynthesis via DAP pathway; LL-2,6-diaminopimelate from (S)-tetrahydrodipicolinate (succinylase route): step 1/3. This Bordetella parapertussis (strain 12822 / ATCC BAA-587 / NCTC 13253) protein is 2,3,4,5-tetrahydropyridine-2,6-dicarboxylate N-succinyltransferase.